Here is a 264-residue protein sequence, read N- to C-terminus: Meiotically up-regulated gene 162 protein (264 aa).

7 consecutive transmembrane segments (helical) span residues Ile-18 to Lys-38, Leu-54 to Ala-74, Val-84 to Phe-104, Ile-140 to Leu-160, His-174 to Ile-194, Phe-199 to Thr-219, and Leu-223 to Tyr-243.

It is found in the endoplasmic reticulum membrane. In terms of biological role, has a role in meiosis. In Schizosaccharomyces pombe (strain 972 / ATCC 24843) (Fission yeast), this protein is Meiotically up-regulated gene 162 protein (mug162).